The sequence spans 198 residues: MTCAQVIRQFYQATIMTATAQQLQFIKDSIKTIPDYPKPGILFRDVTSLLENPLAYAASIELLVERFREAGVTKVVGTEARGFLFGAPVALALGVGFVPVRKPGKLPRATLSESYELEYGTDKLEIHTDAISAGDKVLVVDDLLATGGTIEATAKLIRRLGGEVTDAAFIINLPDLGGEARLNTLGIECYSLVNFSGH.

It belongs to the purine/pyrimidine phosphoribosyltransferase family. In terms of assembly, homodimer.

It localises to the cytoplasm. It catalyses the reaction AMP + diphosphate = 5-phospho-alpha-D-ribose 1-diphosphate + adenine. The protein operates within purine metabolism; AMP biosynthesis via salvage pathway; AMP from adenine: step 1/1. Catalyzes a salvage reaction resulting in the formation of AMP, that is energically less costly than de novo synthesis. In Serratia proteamaculans (strain 568), this protein is Adenine phosphoribosyltransferase.